Here is a 757-residue protein sequence, read N- to C-terminus: Catalase-peroxidase (757 aa).

The tryptophyl-tyrosyl-methioninium (Trp-Tyr) (with M-274) cross-link spans 101–248 (WHSAGTYRIG…LAAVQMGLIY (148 aa)). Histidine 102 acts as the Proton acceptor in catalysis. Positions 213-232 (VHHPDEHRGAKEKASKNSDS) are disordered. Residues 248–274 (YVNPEGPDGCPDPLASARDIRETFARM) constitute a cross-link (tryptophyl-tyrosyl-methioninium (Tyr-Met) (with W-101)). Histidine 289 is a binding site for heme b.

The protein belongs to the peroxidase family. Peroxidase/catalase subfamily. As to quaternary structure, homodimer or homotetramer. It depends on heme b as a cofactor. Formation of the three residue Trp-Tyr-Met cross-link is important for the catalase, but not the peroxidase activity of the enzyme.

It catalyses the reaction H2O2 + AH2 = A + 2 H2O. The enzyme catalyses 2 H2O2 = O2 + 2 H2O. Bifunctional enzyme with both catalase and broad-spectrum peroxidase activity. The protein is Catalase-peroxidase of Xylella fastidiosa (strain M23).